The sequence spans 284 residues: NADH-cytochrome b5 reductase 1 (284 aa).

Residues 8-28 (PLFVFSTIAIIISTFVIFYFV) traverse the membrane as a helical segment. In terms of domain architecture, FAD-binding FR-type spans 41-144 (DTFQKFPLIE…RGPKGFFTYT (104 aa)). Residues 124–139 (DSKKVGEYVEIRGPKG) and 150–182 (SFGMIAGGTGIAPMYQIITAILRNPADKTKISL) contribute to the FAD site.

This sequence belongs to the flavoprotein pyridine nucleotide cytochrome reductase family. Monomer. Component of the 2-(3-amino-3-carboxypropyl)histidine synthase complex composed of DPH1, DPH2, DPH3 and a NADH-dependent reductase, predominantly CBR1. FAD is required as a cofactor.

It is found in the mitochondrion outer membrane. It catalyses the reaction 2 Fe(III)-[cytochrome b5] + NADH = 2 Fe(II)-[cytochrome b5] + NAD(+) + H(+). The enzyme catalyses 2 Fe(3+)-[Dph3] + NADH = 2 Fe(2+)-[Dph3] + NAD(+) + H(+). The protein operates within protein modification; peptidyl-diphthamide biosynthesis. NADH-dependent reductase for DPH3 and cytochrome b5. Required for the first step of diphthamide biosynthesis, a post-translational modification of histidine which occurs in elongation factor 2. DPH1 and DPH2 transfer a 3-amino-3-carboxypropyl (ACP) group from S-adenosyl-L-methionine (SAM) to a histidine residue, the reaction is assisted by a reduction system comprising DPH3 and a NADH-dependent reductase, predominantly CBR1. By reducing DPH3, also involved in the formation of the tRNA wobble base modification mcm5s 2U (5-methoxycarbonylmethyl-2-thiouridine), mediated by the elongator complex. The cytochrome b5/NADH cytochrome b5 reductase electron transfer system supports the catalytic activity of several sterol biosynthetic enzymes. The protein is NADH-cytochrome b5 reductase 1 (CBR1) of Scheffersomyces stipitis (strain ATCC 58785 / CBS 6054 / NBRC 10063 / NRRL Y-11545) (Yeast).